Here is a 959-residue protein sequence, read N- to C-terminus: Lon protease homolog, mitochondrial (959 aa).

Residues 1–67 constitute a mitochondrion transit peptide; sequence MAASTGYVRL…GPAIGGQWRG (67 aa). Disordered stretches follow at residues 77–102 and 218–257; these read GAFS…GSAG and RQLE…HPAE. Positions 91–102 are enriched in gly residues; sequence EEGAGGAGGSAG. Positions 124-370 constitute a Lon N-terminal domain; it reads LPLIAITRNP…KALSLLKKEF (247 aa). Residues 233–243 are compositionally biased toward basic residues; the sequence is HKPRRKSKRGK. Positions 244 to 256 are enriched in basic and acidic residues; it reads KEAEDELSARHPA. An ATP-binding site is contributed by 523–530; sequence GPPGVGKT. The 191-residue stretch at 759–949 folds into the Lon proteolytic domain; the sequence is VTPPGVVMGL…REIFDIAFPD (191 aa). Catalysis depends on residues Ser855 and Lys898.

Belongs to the peptidase S16 family. As to quaternary structure, homohexamer. Organized in a ring with a central cavity. The ATP-binding and proteolytic domains (AP-domain) form a hexameric chamber, while the N-terminal domain is arranged as a trimer of dimers. DNA and RNA binding is stimulated by substrate and inhibited by ATP binding. Interacts with TWNK and mitochondrial DNA polymerase subunit POLG. In terms of tissue distribution, duodenum, heart, lung and liver, but not thymus.

It is found in the mitochondrion matrix. The catalysed reaction is Hydrolysis of proteins in presence of ATP.. Peptidase activity is subject to substrate inhibition by ATP. ATP-dependent serine protease that mediates the selective degradation of misfolded, unassembled or oxidatively damaged polypeptides as well as certain short-lived regulatory proteins in the mitochondrial matrix. Endogenous substrates include mitochondrial steroidogenic acute regulatory (StAR) protein, DELE1, helicase Twinkle (TWNK) and the large ribosomal subunit protein MRPL32/bL32m. MRPL32/bL32m is protected from degradation by LONP1 when it is bound to a nucleic acid (RNA), but TWNK is not. May also have a chaperone function in the assembly of inner membrane protein complexes. Participates in the regulation of mitochondrial gene expression and in the maintenance of the integrity of the mitochondrial genome. Binds to mitochondrial promoters and RNA in a single-stranded, site-specific, and strand-specific manner. May regulate mitochondrial DNA replication and/or gene expression using site-specific, single-stranded DNA binding to target the degradation of regulatory proteins binding to adjacent sites in mitochondrial promoters. In Homo sapiens (Human), this protein is Lon protease homolog, mitochondrial.